Reading from the N-terminus, the 1580-residue chain is Pentafunctional AROM polypeptide (1580 aa).

Residues 1–381 form a 3-dehydroquinate synthase region; the sequence is MATPTVIKIL…HEQKASVVSN (381 aa). NAD(+)-binding positions include 44-46, 81-84, 114-116, and Asp119; these read DTT, EVSK, and GGV. Arg130 is a binding site for 7-phospho-2-dehydro-3-deoxy-D-arabino-heptonate. 139 to 140 lines the NAD(+) pocket; sequence TT. Residues Asp146 and Lys152 each coordinate 7-phospho-2-dehydro-3-deoxy-D-arabino-heptonate. Lys161 contacts NAD(+). A 7-phospho-2-dehydro-3-deoxy-D-arabino-heptonate-binding site is contributed by Asn162. Residues 179–182 and Asn190 each bind NAD(+); that span reads FLNT. Glu194 serves as a coordination point for Zn(2+). Position 247 (Lys247) interacts with 7-phospho-2-dehydro-3-deoxy-D-arabino-heptonate. Glu257 acts as the Proton acceptor; for 3-dehydroquinate synthase activity in catalysis. Residues 261–265 and His268 contribute to the 7-phospho-2-dehydro-3-deoxy-D-arabino-heptonate site; that span reads RNLLN. Residue His268 participates in Zn(2+) binding. Catalysis depends on His272, which acts as the Proton acceptor; for 3-dehydroquinate synthase activity. 7-phospho-2-dehydro-3-deoxy-D-arabino-heptonate contacts are provided by His284 and Lys353. His284 contributes to the Zn(2+) binding site. The interval 394–838 is EPSP synthase; the sequence is VSPGVPHALE…WDTLAQLFKA (445 aa). Cys820 functions as the For EPSP synthase activity in the catalytic mechanism. The segment at 857-1048 is shikimate kinase; it reads ASLFIIGMRG…KKKPQSFFVS (192 aa). Residue 863–870 coordinates ATP; sequence GMRGAGKT. Residues 1049–1269 form a 3-dehydroquinase region; sequence LTLPDLRPSV…AAPGQLSAKE (221 aa). His1172 (proton acceptor; for 3-dehydroquinate dehydratase activity) is an active-site residue. Lys1200 serves as the catalytic Schiff-base intermediate with substrate; for 3-dehydroquinate dehydratase activity. Residues 1282 to 1580 form a shikimate dehydrogenase region; that stretch reads SKKFAIVGKP…AAVMNADADI (299 aa).

It in the N-terminal section; belongs to the sugar phosphate cyclases superfamily. Dehydroquinate synthase family. In the 2nd section; belongs to the EPSP synthase family. This sequence in the 3rd section; belongs to the shikimate kinase family. The protein in the 4th section; belongs to the type-I 3-dehydroquinase family. It in the C-terminal section; belongs to the shikimate dehydrogenase family. As to quaternary structure, homodimer. Zn(2+) serves as cofactor.

The protein resides in the cytoplasm. The catalysed reaction is 7-phospho-2-dehydro-3-deoxy-D-arabino-heptonate = 3-dehydroquinate + phosphate. It catalyses the reaction 3-dehydroquinate = 3-dehydroshikimate + H2O. The enzyme catalyses shikimate + NADP(+) = 3-dehydroshikimate + NADPH + H(+). It carries out the reaction shikimate + ATP = 3-phosphoshikimate + ADP + H(+). The catalysed reaction is 3-phosphoshikimate + phosphoenolpyruvate = 5-O-(1-carboxyvinyl)-3-phosphoshikimate + phosphate. It functions in the pathway metabolic intermediate biosynthesis; chorismate biosynthesis; chorismate from D-erythrose 4-phosphate and phosphoenolpyruvate: step 2/7. The protein operates within metabolic intermediate biosynthesis; chorismate biosynthesis; chorismate from D-erythrose 4-phosphate and phosphoenolpyruvate: step 3/7. It participates in metabolic intermediate biosynthesis; chorismate biosynthesis; chorismate from D-erythrose 4-phosphate and phosphoenolpyruvate: step 4/7. Its pathway is metabolic intermediate biosynthesis; chorismate biosynthesis; chorismate from D-erythrose 4-phosphate and phosphoenolpyruvate: step 5/7. It functions in the pathway metabolic intermediate biosynthesis; chorismate biosynthesis; chorismate from D-erythrose 4-phosphate and phosphoenolpyruvate: step 6/7. In terms of biological role, the AROM polypeptide catalyzes 5 consecutive enzymatic reactions in prechorismate polyaromatic amino acid biosynthesis. This chain is Pentafunctional AROM polypeptide, found in Uncinocarpus reesii (strain UAMH 1704).